Reading from the N-terminus, the 88-residue chain is Small ribosomal subunit protein uS15c (88 aa).

The protein belongs to the universal ribosomal protein uS15 family. Part of the 30S ribosomal subunit.

The protein resides in the plastid. The protein localises to the chloroplast. The polypeptide is Small ribosomal subunit protein uS15c (rps15) (Lobularia maritima (Sweet alyssum)).